Here is a 91-residue protein sequence, read N- to C-terminus: MPRPTGKKFDKRRQQQNPLFKRKKFCRFTAAGVDQIDYKDTETLKDFIGENGKITPARLTGTKAHYQRQLDTAIKRARFLALLPYTDQHKA.

Belongs to the bacterial ribosomal protein bS18 family. Part of the 30S ribosomal subunit. Forms a tight heterodimer with protein bS6.

Functionally, binds as a heterodimer with protein bS6 to the central domain of the 16S rRNA, where it helps stabilize the platform of the 30S subunit. This Burkholderia ambifaria (strain MC40-6) protein is Small ribosomal subunit protein bS18.